We begin with the raw amino-acid sequence, 656 residues long: DNA ligase (656 aa).

Residues 32 to 36 (DAIYD) and 81 to 82 (SL) each bind NAD(+). The active-site N6-AMP-lysine intermediate is Lys112. Positions 133, 167, and 306 each coordinate NAD(+). Residues Cys400, Cys403, Cys416, and Cys421 each contribute to the Zn(2+) site. One can recognise a BRCT domain in the interval 577-656 (KSSSVFNNKT…ELLKRLKELD (80 aa)).

Belongs to the NAD-dependent DNA ligase family. LigA subfamily. Mg(2+) is required as a cofactor. It depends on Mn(2+) as a cofactor.

It catalyses the reaction NAD(+) + (deoxyribonucleotide)n-3'-hydroxyl + 5'-phospho-(deoxyribonucleotide)m = (deoxyribonucleotide)n+m + AMP + beta-nicotinamide D-nucleotide.. Functionally, DNA ligase that catalyzes the formation of phosphodiester linkages between 5'-phosphoryl and 3'-hydroxyl groups in double-stranded DNA using NAD as a coenzyme and as the energy source for the reaction. It is essential for DNA replication and repair of damaged DNA. The sequence is that of DNA ligase from Helicobacter pylori (strain ATCC 700392 / 26695) (Campylobacter pylori).